The sequence spans 654 residues: MLKLLLPQHRTSVYLFKFQFFNFRFLSQSPSLSNSASSFSSSSLAEAILKCRSAEEAFKLFETSSRSRVSKSNDLQSFSAVIHVLTGAHKYTLARCLIKSLIERLKRHSEPSNMSHRLFNALEDIQSPKFSIGVFSLLIMEFLEMGLFEEALWVSREMKCSPDSKACLSILNGLVRRRRFDSVWVDYQLMISRGLVPDVHIYFVLFQCCFKQGLYSKKEKLLDEMTSLGIKPNVYIYTIYILDLCRDNKMEEAEKMFELMKKHGVLPNLYTYSAMIDGYCKTGNVRQAYGLYKEILVAELLPNVVVFGTLVDGFCKARELVTARSLFVHMVKFGVDPNLYVYNCLIHGHCKSGNMLEAVGLLSEMESLNLSPDVFTYTILINGLCIEDQVAEANRLFQKMKNERIFPSSATYNSLIHGYCKEYNMEQALDLCSEMTASGVEPNIITFSTLIDGYCNVRDIKAAMGLYFEMTIKGIVPDVVTYTALIDAHFKEANMKEALRLYSDMLEAGIHPNDHTFACLVDGFWKEGRLSVAIDFYQENNQQRSCWNHVGFTCLIEGLCQNGYILRASRFFSDMRSCGITPDICSYVSMLKGHLQEKRITDTMMLQCDMIKTGILPNLLVNQLLARFYQANGYVKSACFLTNSSRLKTVSNSC.

PPR repeat units follow at residues 37–71, 74–104, 131–161, 163–197, 198–232, 233–267, 268–302, 303–337, 338–372, 373–407, 408–442, 443–477, 478–512, 513–543, 548–582, and 583–617; these read SSFS…RVSK, DLQS…LIER, SIGV…MKCS, DSKA…GLVP, DVHI…GIKP, NVYI…GVLP, NLYT…ELLP, NVVV…GVDP, NLYV…NLSP, DVFT…RIFP, SSAT…GVEP, NIIT…GIVP, DVVT…GIHP, NDHT…NNQQ, NHVG…GITP, and DICS…GILP.

The protein belongs to the PPR family. P subfamily.

This is Pentatricopeptide repeat-containing protein At5g61400 from Arabidopsis thaliana (Mouse-ear cress).